A 595-amino-acid polypeptide reads, in one-letter code: MANNYKDLFIDIDSFDETNIIYVKPLLFFEASRHMGIYYEKEIIMKKPVVNPSNKSNKSKKLNKTNKSNKSNKSDELKKSNKSNKSSALKKSNKSSNKSSNKSSNKSSNKSSNKSSNKSSNKFPDKSDKSDSSNDSDNSDDSDDSSNDSSEFETIKTKKKQKIIIKTPKMIVPFGVKEFDNNGRKNYQMSLSFSTMTNLYNEEEIKKFHGFIKLTDKINEETIMDYKDTWKLPKGLKYKRSLQRLSKDYPHHININMPHDEKMGFMFNVYDEKGGKSKPDIIDKRSIVSAIIELTDLKFTDTEFRANWTLLQVRKFKPYSPIQEFFMTECFICDEDNPEDTVYSKLIEKYQQTLKTPITFPQYPQMNPSHSSSGYAIPYITPYQSNYPIPYPPTYPTTYPTTPLFSEPTIPKPPQQPTTEPPSGFKPPSLSELLSAKKLLKPTKTTVKGVTEGKVVESDDHTSVADIPPPPPPPPSISSDNSSPNKSVKSSTKSSTKSSTKSSTKSSTKSSTKSPSKTPVKSPIKSSSKLSDKKSPTKKIESSGESDSESDSESDSKTTKKSTNKIKKITNNKLENSNTKNNKKFSKKKTISLDK.

3 disordered regions span residues 50–159 (VNPS…KTKK), 398–430 (TYPT…PPSL), and 450–595 (VTEG…SLDK). The span at 83–122 (SNKSSALKKSNKSSNKSSNKSSNKSSNKSSNKSSNKSSNK) shows a compositional bias: low complexity. Over residues 123-132 (FPDKSDKSDS) the composition is skewed to basic and acidic residues. A compositionally biased stretch (acidic residues) spans 137–146 (DNSDDSDDSS). Residues 398-409 (TYPTTPLFSEPT) show a composition bias toward low complexity. Pro residues predominate over residues 410–420 (IPKPPQQPTTE). Low complexity predominate over residues 421–430 (PPSGFKPPSL). Residues 454–463 (KVVESDDHTS) are compositionally biased toward basic and acidic residues. Residues 467 to 476 (IPPPPPPPPS) show a composition bias toward pro residues. Over residues 477 to 529 (ISSDNSSPNKSVKSSTKSSTKSSTKSSTKSSTKSSTKSPSKTPVKSPIKSSSK) the composition is skewed to low complexity. Positions 530-542 (LSDKKSPTKKIES) are enriched in basic and acidic residues. A compositionally biased stretch (acidic residues) spans 544–553 (GESDSESDSE). The segment covering 559 to 570 (TKKSTNKIKKIT) has biased composition (basic residues). The segment covering 571 to 580 (NNKLENSNTK) has biased composition (low complexity). Residues 581-595 (NNKKFSKKKTISLDK) are compositionally biased toward basic residues.

This is an uncharacterized protein from Acanthamoeba polyphaga mimivirus (APMV).